We begin with the raw amino-acid sequence, 196 residues long: Aequorin-1 (196 aa).

Residues 1-7 (MTSEQYS) constitute a propeptide that is removed on maturation. 4 consecutive EF-hand domains span residues 18 to 53 (KWIG…IVIN), 54 to 108 (NLGA…SKNQ), 111 to 146 (LIRL…DGII), and 147 to 182 (QSSE…FWYT). Ca(2+) is bound by residues Asp31, Asn33, Asn35, Arg37, and Glu42. 3 may interact with the chromophore regions span residues 47 to 57 (ASDIVINNLGA), 62 to 72 (AKRHKDAVEAF), and 107 to 117 (NQITLIRLWGD). Residues Asp124, Asp126, Asn128, Glu135, Asp160, Asp162, Ser164, Gln166, and Glu171 each contribute to the Ca(2+) site.

Belongs to the aequorin family. The reduction of the disulfide bond is necessary to regenerate aequorin from apoaequorin.

In terms of biological role, ca(2+)-dependent bioluminescence photoprotein. Displays an emission peak at 470 nm (blue light). Trace amounts of calcium ion trigger the intramolecular oxidation of the chromophore, coelenterazine into coelenteramide and CO(2) with the concomitant emission of light. The protein is Aequorin-1 of Aequorea victoria (Water jellyfish).